A 340-amino-acid polypeptide reads, in one-letter code: ATP-dependent 6-phosphofructokinase (340 aa).

Residue Gly-11 participates in ATP binding. Residue 21–25 coordinates ADP; sequence RAVVR. ATP contacts are provided by residues 72 to 73 and 102 to 105; these read RY and GDGS. Asp-103 contributes to the Mg(2+) binding site. 125–127 contacts substrate; it reads TID. The Proton acceptor role is filled by Asp-127. Arg-154 is a binding site for ADP. Substrate is bound by residues Arg-162 and 169–171; that span reads MGR. ADP contacts are provided by residues 185 to 187, Lys-211, and 213 to 215; these read GAD and KNH. Residues Glu-222, Arg-244, and 250-253 contribute to the substrate site; that span reads HIQR.

It belongs to the phosphofructokinase type A (PFKA) family. ATP-dependent PFK group I subfamily. Prokaryotic clade 'B1' sub-subfamily. In terms of assembly, homotetramer. Mg(2+) is required as a cofactor.

The protein resides in the cytoplasm. The enzyme catalyses beta-D-fructose 6-phosphate + ATP = beta-D-fructose 1,6-bisphosphate + ADP + H(+). Its pathway is carbohydrate degradation; glycolysis; D-glyceraldehyde 3-phosphate and glycerone phosphate from D-glucose: step 3/4. Allosterically activated by ADP and other diphosphonucleosides, and allosterically inhibited by phosphoenolpyruvate. In terms of biological role, catalyzes the phosphorylation of D-fructose 6-phosphate to fructose 1,6-bisphosphate by ATP, the first committing step of glycolysis. In Lactococcus lactis subsp. lactis (Streptococcus lactis), this protein is ATP-dependent 6-phosphofructokinase.